Here is a 399-residue protein sequence, read N- to C-terminus: S-adenosylmethionine synthase (399 aa).

H16 is an ATP binding site. D18 is a binding site for Mg(2+). E44 contacts K(+). L-methionine-binding residues include E57 and Q100. The interval 100–110 is flexible loop; it reads QSPDIAQGVDD. Residues 174–176, 241–242, D250, 256–257, A273, and K277 each bind ATP; these read DAK, RF, and RK. D250 is an L-methionine binding site. K281 provides a ligand contact to L-methionine.

Belongs to the AdoMet synthase family. As to quaternary structure, homotetramer; dimer of dimers. Requires Mg(2+) as cofactor. It depends on K(+) as a cofactor.

It localises to the cytoplasm. It catalyses the reaction L-methionine + ATP + H2O = S-adenosyl-L-methionine + phosphate + diphosphate. The protein operates within amino-acid biosynthesis; S-adenosyl-L-methionine biosynthesis; S-adenosyl-L-methionine from L-methionine: step 1/1. Functionally, catalyzes the formation of S-adenosylmethionine (AdoMet) from methionine and ATP. The overall synthetic reaction is composed of two sequential steps, AdoMet formation and the subsequent tripolyphosphate hydrolysis which occurs prior to release of AdoMet from the enzyme. In Latilactobacillus sakei subsp. sakei (strain 23K) (Lactobacillus sakei subsp. sakei), this protein is S-adenosylmethionine synthase.